The sequence spans 233 residues: Purine nucleoside phosphorylase DeoD-type (233 aa).

His-4 is an a purine D-ribonucleoside binding site. Phosphate is bound by residues Gly-20, Arg-24, Arg-43, and 87–90 (RVGT). A purine D-ribonucleoside is bound by residues 178–180 (EME) and 202–203 (SD). Asp-203 functions as the Proton donor in the catalytic mechanism.

It belongs to the PNP/UDP phosphorylase family. As to quaternary structure, homohexamer; trimer of homodimers.

It carries out the reaction a purine D-ribonucleoside + phosphate = a purine nucleobase + alpha-D-ribose 1-phosphate. The enzyme catalyses a purine 2'-deoxy-D-ribonucleoside + phosphate = a purine nucleobase + 2-deoxy-alpha-D-ribose 1-phosphate. Its function is as follows. Catalyzes the reversible phosphorolytic breakdown of the N-glycosidic bond in the beta-(deoxy)ribonucleoside molecules, with the formation of the corresponding free purine bases and pentose-1-phosphate. The protein is Purine nucleoside phosphorylase DeoD-type of Listeria innocua serovar 6a (strain ATCC BAA-680 / CLIP 11262).